Here is a 79-residue protein sequence, read N- to C-terminus: MAAPTMKERQACWGARDEYWKCLDENTEDASKCKKLRSSFESSCPQQWIKYFDKRRDYLKFKEKFEAGDFQPSKMTAKS.

In terms of domain architecture, CHCH spans Arg9–Phe52. Residues Cys12 to Cys22 carry the Cx9C motif motif. 2 disulfides stabilise this stretch: Cys12/Cys44 and Cys22/Cys33. The short motif at Cys33–Cys44 is the Cx10C motif element.

Belongs to the cytochrome c oxidase subunit 6B family. In terms of assembly, found in a complex with TMEM177, COX20, MT-CO2/COX2, COX18, SCO1 and SCO2. Interacts with COA1, MT-CO2/COX2, SCO1, SCO2 and COX20. Interacts with COX20 in a MT-CO2/COX2- and COX18-dependent manner. Interacts with COX16.

It is found in the mitochondrion intermembrane space. In terms of biological role, involved in the maturation of the mitochondrial respiratory chain complex IV subunit MT-CO2/COX2. Thereby, may regulate early steps of complex IV assembly. Mitochondrial respiratory chain complex IV or cytochrome c oxidase is the component of the respiratory chain that catalyzes the transfer of electrons from intermembrane space cytochrome c to molecular oxygen in the matrix and as a consequence contributes to the proton gradient involved in mitochondrial ATP synthesis. May also be required for efficient formation of respiratory supercomplexes comprised of complexes III and IV. The polypeptide is Cytochrome c oxidase assembly factor 6 homolog (COA6) (Bos taurus (Bovine)).